Reading from the N-terminus, the 428-residue chain is Enolase (428 aa).

Residue Q162 coordinates (2R)-2-phosphoglycerate. E204 acts as the Proton donor in catalysis. Mg(2+) contacts are provided by D241, E283, and D310. (2R)-2-phosphoglycerate-binding residues include K335, R364, S365, and K386. Residue K335 is the Proton acceptor of the active site.

Belongs to the enolase family. It depends on Mg(2+) as a cofactor.

It is found in the cytoplasm. Its subcellular location is the secreted. It localises to the cell surface. It carries out the reaction (2R)-2-phosphoglycerate = phosphoenolpyruvate + H2O. The protein operates within carbohydrate degradation; glycolysis; pyruvate from D-glyceraldehyde 3-phosphate: step 4/5. Functionally, catalyzes the reversible conversion of 2-phosphoglycerate (2-PG) into phosphoenolpyruvate (PEP). It is essential for the degradation of carbohydrates via glycolysis. The chain is Enolase from Nocardia farcinica (strain IFM 10152).